The sequence spans 406 residues: MQELDSSNDEWVKELEGENEESKFTGRRLVKKSISVPELVDEVEEDLDDFTEPADDFNDKVGKKRQRKKKDESGLEKTKKNKKQNSEEVQEMWDSITNNTNSQYGDKVVVKPPKKKDEDAEEIKKLFSLRKKKSKCDKTSMEIGMQVEQVMANLEIAVEDDVICNREGKPAINKLMKLPLLNETLSKKPLQGEFLDHGVLNLLKNWLEPLPDGSLPNINIRSAVLMILNDFRIDLDQDSRREQLIKSGLGKVIMFLSKSDEETTPNRRLANDIINKWGRIIYNKSTRYDNMFTQEELDEQRQILLRRQTKTAPKVSGTRARDFNTDIDLYELGTWTGRARAKIPTTMSMDFKIRPPSKVDINQEEEPCSKWQMEKRHKNKQQKNIRKGGMQALKLSVDGRTMLKYL.

Disordered stretches follow at residues 1-28 and 41-89; these read MQELDSSNDEWVKELEGENEESKFTGRR and DEVE…SEEV. Basic and acidic residues predominate over residues 10–24; sequence EWVKELEGENEESKF. The span at 41–56 shows a compositional bias: acidic residues; it reads DEVEEDLDDFTEPADD. A compositionally biased stretch (basic and acidic residues) spans 69–78; sequence KKDESGLEKT. In terms of domain architecture, TFIIS N-terminal spans 201–284; it reads NLLKNWLEPL…NKWGRIIYNK (84 aa).

This sequence belongs to the IWS1 family.

It localises to the nucleus. Functionally, transcription factor involved in RNA polymerase II (RNAPII) transcription regulation. Involved in transcription elongation. May function at post-recruitment and elongation steps of transcription. This is Protein IWS1 homolog 2 from Arabidopsis thaliana (Mouse-ear cress).